Consider the following 76-residue polypeptide: Small ribosomal subunit protein uS17 (76 aa).

The protein belongs to the universal ribosomal protein uS17 family. Part of the 30S ribosomal subunit.

In terms of biological role, one of the primary rRNA binding proteins, it binds specifically to the 5'-end of 16S ribosomal RNA. This Anaplasma phagocytophilum (strain HZ) protein is Small ribosomal subunit protein uS17.